We begin with the raw amino-acid sequence, 298 residues long: Acetylglutamate kinase (298 aa).

Residues 61–62, Arg-83, and Asn-188 each bind substrate; that span reads GG.

This sequence belongs to the acetylglutamate kinase family. ArgB subfamily.

It localises to the cytoplasm. The enzyme catalyses N-acetyl-L-glutamate + ATP = N-acetyl-L-glutamyl 5-phosphate + ADP. It functions in the pathway amino-acid biosynthesis; L-arginine biosynthesis; N(2)-acetyl-L-ornithine from L-glutamate: step 2/4. Its function is as follows. Catalyzes the ATP-dependent phosphorylation of N-acetyl-L-glutamate. This is Acetylglutamate kinase from Syntrophobacter fumaroxidans (strain DSM 10017 / MPOB).